The following is a 494-amino-acid chain: Probable cytochrome P450 515A1 (494 aa).

The chain crosses the membrane as a helical span at residues 1–21 (MILGIILGLFIYIYLINIKFF). Cysteine 440 is a heme binding site.

This sequence belongs to the cytochrome P450 family. Requires heme as cofactor.

Its subcellular location is the membrane. The protein is Probable cytochrome P450 515A1 (cyp515A1) of Dictyostelium discoideum (Social amoeba).